Consider the following 466-residue polypeptide: Methylenetetrahydrofolate--tRNA-(uracil-5-)-methyltransferase TrmFO (466 aa).

10–15 (GGGLAG) is an FAD binding site.

The protein belongs to the MnmG family. TrmFO subfamily. FAD is required as a cofactor.

Its subcellular location is the cytoplasm. The enzyme catalyses uridine(54) in tRNA + (6R)-5,10-methylene-5,6,7,8-tetrahydrofolate + NADH + H(+) = 5-methyluridine(54) in tRNA + (6S)-5,6,7,8-tetrahydrofolate + NAD(+). It carries out the reaction uridine(54) in tRNA + (6R)-5,10-methylene-5,6,7,8-tetrahydrofolate + NADPH + H(+) = 5-methyluridine(54) in tRNA + (6S)-5,6,7,8-tetrahydrofolate + NADP(+). Catalyzes the folate-dependent formation of 5-methyl-uridine at position 54 (M-5-U54) in all tRNAs. In Phenylobacterium zucineum (strain HLK1), this protein is Methylenetetrahydrofolate--tRNA-(uracil-5-)-methyltransferase TrmFO.